The primary structure comprises 186 residues: Inosine/xanthosine triphosphatase (186 aa).

Gln75 lines the Mg(2+) pocket.

The protein belongs to the YjjX NTPase family. Homodimer. The cofactor is Mg(2+). Mn(2+) is required as a cofactor.

The enzyme catalyses XTP + H2O = XDP + phosphate + H(+). The catalysed reaction is ITP + H2O = IDP + phosphate + H(+). Phosphatase that hydrolyzes non-canonical purine nucleotides such as XTP and ITP to their respective diphosphate derivatives. Probably excludes non-canonical purines from DNA/RNA precursor pool, thus preventing their incorporation into DNA/RNA and avoiding chromosomal lesions. This is Inosine/xanthosine triphosphatase from Shewanella baltica (strain OS195).